The following is a 427-amino-acid chain: Peptidase B (427 aa).

2 residues coordinate Mn(2+): lysine 195 and aspartate 200. The active site involves lysine 207. The Mn(2+) site is built by aspartate 218, aspartate 277, and glutamate 279. Arginine 281 is an active-site residue.

This sequence belongs to the peptidase M17 family. As to quaternary structure, homohexamer. The cofactor is Mn(2+).

Its subcellular location is the cytoplasm. The catalysed reaction is Release of an N-terminal amino acid, Xaa, from a peptide or arylamide. Xaa is preferably Glu or Asp but may be other amino acids, including Leu, Met, His, Cys and Gln.. Probably plays an important role in intracellular peptide degradation. This Escherichia coli (strain K12 / MC4100 / BW2952) protein is Peptidase B.